A 405-amino-acid chain; its full sequence is NADH-quinone oxidoreductase subunit D (405 aa).

Belongs to the complex I 49 kDa subunit family. As to quaternary structure, NDH-1 is composed of 14 different subunits. Subunits NuoB, C, D, E, F, and G constitute the peripheral sector of the complex.

It is found in the cell inner membrane. The catalysed reaction is a quinone + NADH + 5 H(+)(in) = a quinol + NAD(+) + 4 H(+)(out). Functionally, NDH-1 shuttles electrons from NADH, via FMN and iron-sulfur (Fe-S) centers, to quinones in the respiratory chain. The immediate electron acceptor for the enzyme in this species is believed to be ubiquinone. Couples the redox reaction to proton translocation (for every two electrons transferred, four hydrogen ions are translocated across the cytoplasmic membrane), and thus conserves the redox energy in a proton gradient. The chain is NADH-quinone oxidoreductase subunit D from Afipia carboxidovorans (strain ATCC 49405 / DSM 1227 / KCTC 32145 / OM5) (Oligotropha carboxidovorans).